A 155-amino-acid polypeptide reads, in one-letter code: MKKIVGALAVFVITYALFSAAGYLFPVDQEWYNSLKKPDWTPSGTAIGIIWAILFALISLSAAIVYAAFSFKGAKSFWFTLLINYVLNQAFSYFQFTQKNLLAASLDCLLVAITAIVLLIIAKKYSRAASYLLLPYFLWSAFATFLSFTINSMNL.

The next 5 helical transmembrane spans lie at 4–24 (IVGA…AGYL), 46–66 (AIGI…AIVY), 77–97 (FWFT…FQFT), 101–121 (LLAA…LLII), and 130–150 (SYLL…SFTI).

It belongs to the TspO/BZRP family.

It is found in the cell membrane. This is an uncharacterized protein from Bacillus subtilis (strain 168).